A 321-amino-acid chain; its full sequence is Tetraketide alpha-pyrone reductase 2 (321 aa).

S2 carries the post-translational modification N-acetylserine. NADP(+) is bound by residues Y4 to V28, K40, and Y160.

This sequence belongs to the NAD(P)-dependent epimerase/dehydratase family. Dihydroflavonol-4-reductase subfamily.

The protein resides in the cytoplasm. May be involved in the biosynthesis of hydroxylated tetraketide compounds that serve as sporopollenin precursors (the main constituents of exine). Acts on tetraketide alpha-pyrones and reduces the carbonyl function on the tetraketide alkyl chain to a secondary alcohol function. This is Tetraketide alpha-pyrone reductase 2 (TKPR2) from Arabidopsis thaliana (Mouse-ear cress).